We begin with the raw amino-acid sequence, 492 residues long: Katanin p60 ATPase-containing subunit A1 (492 aa).

Positions 91–158 are disordered; the sequence is PAHDGEVWSL…MKPVRAREKK (68 aa). Positions 138 to 147 are enriched in polar residues; that stretch reads LPSSKNTNNV. 250–257 serves as a coordination point for ATP; the sequence is GPPGTGKT.

The protein belongs to the AAA ATPase family. Katanin p60 subunit A1 subfamily. Can homooligomerize into hexameric rings, which may be promoted by interaction with microtubules. Interacts with katnb1, which may serve as a targeting subunit.

It is found in the cytoplasm. The protein localises to the cytoskeleton. Its subcellular location is the microtubule organizing center. It localises to the centrosome. The protein resides in the spindle pole. It is found in the spindle. It carries out the reaction n ATP + n H2O + a microtubule = n ADP + n phosphate + (n+1) alpha/beta tubulin heterodimers.. With respect to regulation, ATPase activity is stimulated by microtubules, which promote homooligomerization. ATP-dependent microtubule severing is stimulated by interaction with katnb1. In terms of biological role, catalytic subunit of a complex which severs microtubules in an ATP-dependent manner. Microtubule severing may promote rapid reorganization of cellular microtubule arrays and the release of microtubules from the centrosome following nucleation. In Xenopus tropicalis (Western clawed frog), this protein is Katanin p60 ATPase-containing subunit A1 (katna1).